The primary structure comprises 902 residues: MLAKLLTKIFGSRNDRTLCRMSKAVDAINQMEPAMEQLSDEQLAAKTVEFRDCIAQGATVDSLLPEAFAVVREASKRVFGMRHFDVQLMGGMVLNDRCIAEMRTGEGKTLTATLPAYLNALSGKGVHVVTVNDYLAQRDAENNRPLFEFLGLSVGINLPGLPAPAKRAAYAADITYGTNNEYGFDYLRDNMAFSPEERVQRKLHYALVDEVDSILIDEARTPLIISGPAEDSSDMYRRVDKLIPHLIRQDKEDSESFQGEGHFSVDEKSRQVNLTERGLMLIEELLVKAGIMEEGESLYSPANIMLMHHVTAALRAHVLFARDVDYIVKDGEVIIVDEHTGRTMPGRRWSDGLHQAVEAKENVAIQNENQTLASITFQNYFRLYEKLAGMTGTADTEAFEFSSIYKLDTIVVPTNRPMIRKDLADLVYMTEKEKIDAIIEDIKTCTERGQPVLVGTISIEKSELVSGELEKAGIAHKVLNAKFHAMEADIVAQAGQPGAVTIATNMAGRGTDIVLGGSWQAEVAALESPDEQQIAAIKDAWQPRHEAVLAAGGLHIIGTERHESRRIDNQLRGRSGRQGDAGSSRFYLSMEDALMRIFASDRVSGMMRKLGMKPGEAIEHPWVTKAIANAQRKVESRNFDIRKQLLEYDDVANDQRCAIYTQRNELLDVADISETVKSIREDVLKTILDSYIPPQSLEEMWDVQGLEHRLKDDFDLDMPVAQWLDDEPGLHEEILRERVLEQMLAQYQRKEEIVGSDIMRNFEKGVMLQTLDSLWKEHLAAMDYLRQGIHLRGYAQKDPKQEYKRESFAMFAAMLESLKYEVISMLSKVQVRMPEEVEAMEQQRREEAERLARQQQLSHQAPVEELTQGSAAAAQEGRKVGRNDPCPCGSGKKFKHCHGKLQ.

ATP contacts are provided by residues glutamine 87, 105-109 (GEGKT), and aspartate 512. Positions 851 to 902 (LARQQQLSHQAPVEELTQGSAAAAQEGRKVGRNDPCPCGSGKKFKHCHGKLQ) are disordered. Positions 886, 888, 897, and 898 each coordinate Zn(2+). Basic residues predominate over residues 892 to 902 (KKFKHCHGKLQ).

This sequence belongs to the SecA family. Monomer and homodimer. Part of the essential Sec protein translocation apparatus which comprises SecA, SecYEG and auxiliary proteins SecDF-YajC and YidC. The cofactor is Zn(2+).

It is found in the cell inner membrane. It localises to the cytoplasm. It catalyses the reaction ATP + H2O + cellular proteinSide 1 = ADP + phosphate + cellular proteinSide 2.. Functionally, part of the Sec protein translocase complex. Interacts with the SecYEG preprotein conducting channel. Has a central role in coupling the hydrolysis of ATP to the transfer of proteins into and across the cell membrane, serving both as a receptor for the preprotein-SecB complex and as an ATP-driven molecular motor driving the stepwise translocation of polypeptide chains across the membrane. This is Protein translocase subunit SecA from Sodalis glossinidius (strain morsitans).